Here is a 386-residue protein sequence, read N- to C-terminus: Oxysterol-binding protein-related protein 4A (386 aa).

Belongs to the OSBP family. Expressed in roots, stems and flowers.

May be involved in the transport of sterols. The polypeptide is Oxysterol-binding protein-related protein 4A (ORP4A) (Arabidopsis thaliana (Mouse-ear cress)).